Here is a 31-residue protein sequence, read N- to C-terminus: Mu-conotoxin SmIIIA (31 aa).

Positions 1 to 6 (PLFDKR) are excised as a propeptide. At Gln7 the chain carries Pyrrolidone carboxylic acid. Disulfide bonds link Cys9–Cys21, Cys10–Cys27, and Cys16–Cys28. Position 28 is a cysteine amide (Cys28).

It belongs to the conotoxin M superfamily. SmIIIA' is a putative isoform where the N-terminal AA is missing. Expressed by the venom duct.

The protein resides in the secreted. In terms of biological role, mu-conotoxins block voltage-gated sodium channels (Nav). This toxin blocks rNav1.5/SCN5A (IC(50) is 1.3 uM), rNav1.6/SCN8A (IC(50) is 160 nM), rNav1.7/SCN9A (IC(50) is 1.3 uM), rNav1.1/SCN1A (K(d) is 3.8 nM), rNav1.2/SCN2A (K(d) is 1.3 nM), rNav1.4/SCN4A (K(d) is 0.22 nM), rNav1.6/SCN8A (K(d) is 69 nM), and rNav1.7/SCN9A (K(d) is 260 nM). This toxin is very potent but weakly discriminating among sodium channels. The block of these channels is modified when beta-subunits are coexpressed with alpha subunits. Hence, blocks of channels containing beta-1 and beta-3 subunits are more potent (compared to channels without beta subunits), whereas blocks of channels containing beta-2 and beta-4 subunits are less potent (compared to channels without beta subunits). The protein is Mu-conotoxin SmIIIA of Conus stercusmuscarum (Fly-specked cone).